The sequence spans 426 residues: Enolase (426 aa).

(2R)-2-phosphoglycerate is bound at residue Gln163. Glu205 acts as the Proton donor in catalysis. Residues Asp242, Glu283, and Asp310 each contribute to the Mg(2+) site. Residues Lys335, Arg364, Ser365, and Lys386 each coordinate (2R)-2-phosphoglycerate. Lys335 serves as the catalytic Proton acceptor.

It belongs to the enolase family. Mg(2+) is required as a cofactor.

It localises to the cytoplasm. The protein localises to the secreted. Its subcellular location is the cell surface. The enzyme catalyses (2R)-2-phosphoglycerate = phosphoenolpyruvate + H2O. It participates in carbohydrate degradation; glycolysis; pyruvate from D-glyceraldehyde 3-phosphate: step 4/5. Catalyzes the reversible conversion of 2-phosphoglycerate (2-PG) into phosphoenolpyruvate (PEP). It is essential for the degradation of carbohydrates via glycolysis. This is Enolase from Cutibacterium acnes (strain DSM 16379 / KPA171202) (Propionibacterium acnes).